The chain runs to 210 residues: Protoporphyrinogen IX oxidase (210 aa).

The next 5 membrane-spanning stretches (helical) occupy residues 22–42 (WFKA…FYLV), 74–94 (YNII…GLIF), 103–123 (GWLH…FYCG), 141–161 (FRAL…LAVF), and 165–185 (LPLD…AASI). H27 serves as a coordination point for heme. Heme is bound at residue K108.

This sequence belongs to the HemJ family. Homodimer. Can also form higher oligomers, most probably tetramers. Interacts with Sll1106, however it is unlikely that Sll1106 is required for PPO function. The cofactor is heme b.

The protein resides in the cell membrane. It catalyses the reaction protoporphyrinogen IX + 3 A = protoporphyrin IX + 3 AH2. Its pathway is porphyrin-containing compound metabolism; protoporphyrin-IX biosynthesis; protoporphyrin-IX from protoporphyrinogen-IX: step 1/1. Its function is as follows. Catalyzes the oxidation of protoporphyrinogen IX to protoporphyrin IX. Is involved in the biosynthesis of tetrapyrrole molecules like heme and chlorophyll. Does not use oxygen or artificial electron acceptors such as menadione or benzoquinone. Is functionally coupled with coproporphyrinogen III oxidase (CPO). Is essential for growth. The sequence is that of Protoporphyrinogen IX oxidase from Synechocystis sp. (strain ATCC 27184 / PCC 6803 / Kazusa).